The following is a 418-amino-acid chain: uncharacterized protein (418 aa).

This is an uncharacterized protein from Invertebrate iridescent virus 6 (IIV-6).